The primary structure comprises 438 residues: MKPLHYTASALALGLALMGNAQAVTTIPFWHSMEGELGKEVDSLAQRFNAENPDYKIVPTYKGNYEQNLSAGIAVFRTGNAPAILQVYEVGTATMMASKAIKPVYDVFKEAGIQFDESQFVPTVSGYYSDSKTGHLLSQPFNSSTSVLYYNKDAFKKAGLDPEQPPKTWQDLADYSAKLKASGIKCGYASGWQGWIQLENFSAWNGLPFASKNNGFDGTDAVLEFNKPEQVKHIAMLEEMNKKGDFSYVGRKDESTEKFYNGDCAMTTASSGSLANIREYAKFNYGVGMMPYDADAKDAPQNAIIGGASLWVMQGKDKETYTGVAKFLDFLAKPENAAEWHQKTGYLPITKAAYDLTREQGFYEKNPGADTATRQMLNKPPLPFTKGLRLGNMPQIRVIVDEELESVWTGKKTPQQALDTAVERGNQLLRRFEKSTKS.

The signal sequence occupies residues 1–23 (MKPLHYTASALALGLALMGNAQA). Sn-glycerol 3-phosphate contacts are provided by Tyr-65, Glu-89, Ser-144, Ser-270, Gly-307, Tyr-346, and Arg-397.

The protein belongs to the bacterial solute-binding protein 1 family. As to quaternary structure, the complex is composed of two ATP-binding proteins (UgpC), two transmembrane proteins (UgpA and UgpE) and a solute-binding protein (UgpB).

It localises to the periplasm. Its function is as follows. Part of the ABC transporter complex UgpBAEC involved in sn-glycerol-3-phosphate (G3P) import. Binds G3P. In Shigella flexneri, this protein is sn-glycerol-3-phosphate-binding periplasmic protein UgpB (ugpB).